Consider the following 572-residue polypeptide: Proline--tRNA ligase (572 aa).

It belongs to the class-II aminoacyl-tRNA synthetase family. ProS type 1 subfamily. In terms of assembly, homodimer.

It is found in the cytoplasm. It catalyses the reaction tRNA(Pro) + L-proline + ATP = L-prolyl-tRNA(Pro) + AMP + diphosphate. Catalyzes the attachment of proline to tRNA(Pro) in a two-step reaction: proline is first activated by ATP to form Pro-AMP and then transferred to the acceptor end of tRNA(Pro). As ProRS can inadvertently accommodate and process non-cognate amino acids such as alanine and cysteine, to avoid such errors it has two additional distinct editing activities against alanine. One activity is designated as 'pretransfer' editing and involves the tRNA(Pro)-independent hydrolysis of activated Ala-AMP. The other activity is designated 'posttransfer' editing and involves deacylation of mischarged Ala-tRNA(Pro). The misacylated Cys-tRNA(Pro) is not edited by ProRS. This is Proline--tRNA ligase from Caldicellulosiruptor bescii (strain ATCC BAA-1888 / DSM 6725 / KCTC 15123 / Z-1320) (Anaerocellum thermophilum).